The primary structure comprises 34 residues: Conotoxin de13a (34 aa).

4-hydroxyproline occurs at positions 3 and 7. Residue tryptophan 14 is modified to 6'-bromotryptophan. Residue lysine 18 is modified to 5-hydroxylysine. Proline 21 is subject to 4-hydroxyproline. A 5-hydroxylysine modification is found at lysine 25. Histidine 32 carries the post-translational modification Histidine amide.

Contains 4 disulfide bonds. In terms of processing, the diastereomeric form of 5-hydroxylysine found was not conclusively established, but it is probably 5R. As to expression, expressed by the venom duct.

The protein resides in the secreted. The polypeptide is Conotoxin de13a (Conasprella delessertii (Sozon's cone)).